Here is a 267-residue protein sequence, read N- to C-terminus: Proteasome assembly chaperone 2 (267 aa).

It belongs to the PSMG2 family. In terms of assembly, component of the 20S proteasome chaperone. Forms a heterodimer with PBA1 that binds to proteasome precursors.

The protein localises to the cytoplasm. Involved in 20S proteasome assembly. Required for maximal proteasome activity. Affects the chymotrypsin-like activity of the proteasome. Can be degraded by the proteasome. Involved in the endoplasmic reticulum-associated degradation (ERAD). This is Proteasome assembly chaperone 2 (ADD66) from Saccharomyces cerevisiae (strain ATCC 204508 / S288c) (Baker's yeast).